The primary structure comprises 403 residues: Dual-specificity RNA methyltransferase RlmN (403 aa).

The disordered stretch occupies residues 1 to 25 (MTKIPMQPADSTPATFHPNAPTKTN). Glu-112 functions as the Proton acceptor in the catalytic mechanism. The Radical SAM core domain occupies 123–364 (VNGRKTLCIS…VCTIRQTRGD (242 aa)). Cys-130 and Cys-370 are disulfide-bonded. Residues Cys-137, Cys-141, and Cys-144 each contribute to the [4Fe-4S] cluster site. Residues 193 to 194 (GE), Ser-225, 247 to 249 (SLH), and Asn-327 each bind S-adenosyl-L-methionine. Cys-370 (S-methylcysteine intermediate) is an active-site residue.

This sequence belongs to the radical SAM superfamily. RlmN family. The cofactor is [4Fe-4S] cluster.

The protein resides in the cytoplasm. It carries out the reaction adenosine(2503) in 23S rRNA + 2 reduced [2Fe-2S]-[ferredoxin] + 2 S-adenosyl-L-methionine = 2-methyladenosine(2503) in 23S rRNA + 5'-deoxyadenosine + L-methionine + 2 oxidized [2Fe-2S]-[ferredoxin] + S-adenosyl-L-homocysteine. It catalyses the reaction adenosine(37) in tRNA + 2 reduced [2Fe-2S]-[ferredoxin] + 2 S-adenosyl-L-methionine = 2-methyladenosine(37) in tRNA + 5'-deoxyadenosine + L-methionine + 2 oxidized [2Fe-2S]-[ferredoxin] + S-adenosyl-L-homocysteine. Functionally, specifically methylates position 2 of adenine 2503 in 23S rRNA and position 2 of adenine 37 in tRNAs. m2A2503 modification seems to play a crucial role in the proofreading step occurring at the peptidyl transferase center and thus would serve to optimize ribosomal fidelity. This Psychrobacter sp. (strain PRwf-1) protein is Dual-specificity RNA methyltransferase RlmN.